The following is a 298-amino-acid chain: UDP-3-O-acyl-N-acetylglucosamine deacetylase (298 aa).

Positions 75, 232, and 236 each coordinate Zn(2+). The Proton donor role is filled by His-259.

It belongs to the LpxC family. Requires Zn(2+) as cofactor.

The catalysed reaction is a UDP-3-O-[(3R)-3-hydroxyacyl]-N-acetyl-alpha-D-glucosamine + H2O = a UDP-3-O-[(3R)-3-hydroxyacyl]-alpha-D-glucosamine + acetate. Its pathway is glycolipid biosynthesis; lipid IV(A) biosynthesis; lipid IV(A) from (3R)-3-hydroxytetradecanoyl-[acyl-carrier-protein] and UDP-N-acetyl-alpha-D-glucosamine: step 2/6. Its function is as follows. Catalyzes the hydrolysis of UDP-3-O-myristoyl-N-acetylglucosamine to form UDP-3-O-myristoylglucosamine and acetate, the committed step in lipid A biosynthesis. The sequence is that of UDP-3-O-acyl-N-acetylglucosamine deacetylase from Nitratiruptor sp. (strain SB155-2).